The chain runs to 83 residues: Cell division topological specificity factor (83 aa).

This sequence belongs to the MinE family.

Prevents the cell division inhibition by proteins MinC and MinD at internal division sites while permitting inhibition at polar sites. This ensures cell division at the proper site by restricting the formation of a division septum at the midpoint of the long axis of the cell. This Marinobacter nauticus (strain ATCC 700491 / DSM 11845 / VT8) (Marinobacter aquaeolei) protein is Cell division topological specificity factor.